Reading from the N-terminus, the 89-residue chain is Large ribosomal subunit protein eL43 (89 aa).

Residues cysteine 38, cysteine 41, cysteine 56, and cysteine 59 each coordinate Zn(2+). The C4-type zinc-finger motif lies at 38-59; sequence CPVCHKRAVKRVGTGIWRCTKC.

The protein belongs to the eukaryotic ribosomal protein eL43 family. Putative zinc-binding subfamily. Part of the 50S ribosomal subunit. Zn(2+) serves as cofactor.

Functionally, binds to the 23S rRNA. This chain is Large ribosomal subunit protein eL43, found in Methanopyrus kandleri (strain AV19 / DSM 6324 / JCM 9639 / NBRC 100938).